Consider the following 351-residue polypeptide: MAPVLPLVLPLQPRIRLAQGLWLLSWLLVLVGGLTLLCSGHLLVQLWHLGTFLAPSCPFSALPQVALAASAVALGTGLVGSGASRASLDAEQYPPWRGVLGPLLVAGTAGGGGLLVLALGLALALPGTLDTGLEEGLGSALVHYKDTEVPGRCQAKRLLDELQLRHHCCGRHGYKDWFGIQWVSNRYLDPNDPDVVDRIQSNVEGLYLIDGVPFSCCNPHSPRPCLQSQLSDPHAHPLFDPRQPNLNLWSQGCHEVLLGHLQGLASTLGNMLAVTFLLQTLVLLGLRYLQTALEGLGGVIDGEGEAQGYLFPAGLKDMLKTAWLQGAGPHRPAPGETPPEEKPPKECLPEA.

Over 1-19 (MAPVLPLVLPLQPRIRLAQ) the chain is Cytoplasmic. Residues 20–43 (GLWLLSWLLVLVGGLTLLCSGHLL) traverse the membrane as a helical segment. The Lumenal segment spans residues 44–64 (VQLWHLGTFLAPSCPFSALPQ). A helical transmembrane segment spans residues 65-84 (VALAASAVALGTGLVGSGAS). Over 85–102 (RASLDAEQYPPWRGVLGP) the chain is Cytoplasmic. The helical transmembrane segment at 103–125 (LLVAGTAGGGGLLVLALGLALAL) threads the bilayer. The Lumenal portion of the chain corresponds to 126 to 264 (PGTLDTGLEE…EVLLGHLQGL (139 aa)). A helical membrane pass occupies residues 265-286 (ASTLGNMLAVTFLLQTLVLLGL). Topologically, residues 287–351 (RYLQTALEGL…KPPKECLPEA (65 aa)) are cytoplasmic. The interval 325–351 (QGAGPHRPAPGETPPEEKPPKECLPEA) is disordered. Basic and acidic residues predominate over residues 339–351 (PEEKPPKECLPEA).

The protein belongs to the PRPH2/ROM1 family. In terms of assembly, homodimer; disulfide-linked. Forms a homotetramer. Forms a heterotetramer with PRPH2. Homotetramer and heterotetramer core complexes go on to form higher order complexes by formation of intermolecular disulfide bonds. Interacts with STX3. Interacts with SNAP25. In terms of tissue distribution, retina photoreceptor (at protein level). In rim region of ROS disks (at protein level).

The protein localises to the photoreceptor inner segment membrane. It is found in the photoreceptor outer segment membrane. Functionally, plays a role in rod outer segment (ROS) morphogenesis. May play a role with PRPH2 in the maintenance of the structure of ROS curved disks. Plays a role in the organization of the ROS and maintenance of ROS disk diameter. Involved in the maintenance of the retina outer nuclear layer. The chain is Rod outer segment membrane protein 1 (ROM1) from Bos taurus (Bovine).